Consider the following 399-residue polypeptide: Argininosuccinate synthase (399 aa).

Residue 9-17 participates in ATP binding; sequence AYSGGLDTS. Y85 contributes to the L-citrulline binding site. G115 is an ATP binding site. 3 residues coordinate L-aspartate: T117, N121, and D122. N121 provides a ligand contact to L-citrulline. 4 residues coordinate L-citrulline: R125, S173, E258, and Y270.

This sequence belongs to the argininosuccinate synthase family. Type 1 subfamily. In terms of assembly, homotetramer.

The protein localises to the cytoplasm. The catalysed reaction is L-citrulline + L-aspartate + ATP = 2-(N(omega)-L-arginino)succinate + AMP + diphosphate + H(+). The protein operates within amino-acid biosynthesis; L-arginine biosynthesis; L-arginine from L-ornithine and carbamoyl phosphate: step 2/3. In Streptococcus gordonii (strain Challis / ATCC 35105 / BCRC 15272 / CH1 / DL1 / V288), this protein is Argininosuccinate synthase.